The chain runs to 438 residues: Transmembrane protease serine 11F (438 aa).

Residues 1 to 32 (MMYAPVEFSEAEFSRAEYQRKQQFWDSVRLAL) lie on the Cytoplasmic side of the membrane. Residues 33–53 (FTLAIVAIIGIAIGIVTHFVV) form a helical; Signal-anchor for type II membrane protein membrane-spanning segment. Residues 54–438 (EDDKSFYYLA…RDWIASKTGM (385 aa)) lie on the Extracellular side of the membrane. An SEA domain is found at 57–175 (KSFYYLASFK…PSFRLTPIDS (119 aa)). The 232-residue stretch at 206 to 437 (IVQGRETAME…YRDWIASKTG (232 aa)) folds into the Peptidase S1 domain. Cys-233 and Cys-249 form a disulfide bridge. Catalysis depends on charge relay system residues His-248 and Asp-293. Disulfide bonds link Cys-358/Cys-374 and Cys-385/Cys-413. Residue Ser-389 is the Charge relay system of the active site.

Belongs to the peptidase S1 family.

The protein localises to the membrane. Probable serine protease. This Homo sapiens (Human) protein is Transmembrane protease serine 11F (TMPRSS11F).